Reading from the N-terminus, the 156-residue chain is Rhodanese-like domain-containing protein 17 (156 aa).

Positions 44–146 (LDSGYTFLDV…WVNKRFPVKV (103 aa)) constitute a Rhodanese domain. Cysteine 106 serves as the catalytic Cysteine persulfide intermediate.

In Arabidopsis thaliana (Mouse-ear cress), this protein is Rhodanese-like domain-containing protein 17 (STR17).